The primary structure comprises 65 residues: Cytochrome b-c1 complex subunit 9, mitochondrial (65 aa).

A helical transmembrane segment spans residues 14–34 (IYVATIFGGAFAFQGFFDVAV).

The protein belongs to the UQCR10/QCR9 family. As to quaternary structure, component of the ubiquinol-cytochrome c oxidoreductase (cytochrome b-c1 complex, complex III, CIII), a multisubunit enzyme composed of 10 subunits. The complex is composed of 3 respiratory subunits cytochrome b (COB), cytochrome c1 (CYT1) and Rieske protein (RIP1), 2 core protein subunits COR1 and QCR2, and 5 low-molecular weight protein subunits QCR6, QCR7, QCR8, QCR9 and QCR10. The complex exists as an obligatory dimer and forms supercomplexes (SCs) in the inner mitochondrial membrane with a monomer or a dimer of cytochrome c oxidase (complex IV, CIV), resulting in 2 different assemblies (supercomplexes III(2)IV and III(2)IV(2)).

The protein resides in the membrane. Its subcellular location is the mitochondrion inner membrane. Component of the ubiquinol-cytochrome c oxidoreductase, a multisubunit transmembrane complex that is part of the mitochondrial electron transport chain which drives oxidative phosphorylation. The complex plays an important role in the uptake of multiple carbon sources present in different host niches. This Candida albicans (strain SC5314 / ATCC MYA-2876) (Yeast) protein is Cytochrome b-c1 complex subunit 9, mitochondrial.